A 516-amino-acid chain; its full sequence is Gamma-aminobutyrate transaminase 1, mitochondrial (516 aa).

Residues 1–47 (MVIARGLLRSNASSSSSQAINLLKYVTSTGSLQGHTQNLCDASTRHF) constitute a mitochondrion transit peptide. Polar residues predominate over residues 45-60 (RHFSSVPSPQSNSTEE). Residues 45 to 64 (RHFSSVPSPQSNSTEENGFK) form a disordered region. Residue 171–172 (GS) coordinates pyridoxal 5'-phosphate. Substrate is bound at residue Y204. D311 contacts pyridoxal 5'-phosphate. A substrate-binding site is contributed by K340. K340 is subject to N6-(pyridoxal phosphate)lysine.

This sequence belongs to the class-III pyridoxal-phosphate-dependent aminotransferase family.

The protein localises to the mitochondrion. It carries out the reaction 4-aminobutanoate + pyruvate = succinate semialdehyde + L-alanine. The catalysed reaction is 4-aminobutanoate + glyoxylate = succinate semialdehyde + glycine. In terms of biological role, transaminase that degrades gamma-amino butyric acid (GABA) and uses pyruvate as amino-group acceptor, but not 2-oxoglutarate. The protein is Gamma-aminobutyrate transaminase 1, mitochondrial of Oryza sativa subsp. indica (Rice).